The sequence spans 142 residues: UPF0102 protein Bcen2424_0290 (142 aa).

The segment covering 1–19 (MCHAAPARPEGARGRPPSG) has biased composition (low complexity). The segment at 1 to 27 (MCHAAPARPEGARGRPPSGDNFSGAAR) is disordered.

Belongs to the UPF0102 family.

The sequence is that of UPF0102 protein Bcen2424_0290 from Burkholderia cenocepacia (strain HI2424).